The following is a 151-amino-acid chain: Transcriptional repressor NrdR (151 aa).

A zinc finger lies at 3-34; that stretch reads CPFCNAQDTKVIDSRLVSEGSQVRRRRSCNEC. The region spanning 49-139 is the ATP-cone domain; the sequence is PRLIKSDGRR…VYRSFKDVKE (91 aa).

The protein belongs to the NrdR family. Requires Zn(2+) as cofactor.

Negatively regulates transcription of bacterial ribonucleotide reductase nrd genes and operons by binding to NrdR-boxes. The sequence is that of Transcriptional repressor NrdR from Psychromonas ingrahamii (strain DSM 17664 / CCUG 51855 / 37).